We begin with the raw amino-acid sequence, 1046 residues long: SWI/SNF-related matrix-associated actin-dependent regulator of chromatin subfamily A member 1 (1046 aa).

The interval 27–61 (EQPGPSTFKEEGAAAAATEGTTATEKGEKKEKITS) is disordered. Low complexity predominate over residues 39–50 (AAAAATEGTTAT). A phosphoserine mark is found at Ser-120 and Ser-123. The Helicase ATP-binding domain occupies 199 to 364 (ISLYENGVNG…WALLNFLLPD (166 aa)). 212 to 219 (DEMGLGKT) serves as a coordination point for ATP. A DEAH box motif is present at residues 315 to 318 (DEAH). A Helicase C-terminal domain is found at 494-645 (ALDKLLARIK…SIVIQQGRLI (152 aa)). Residues Lys-654, Lys-720, and Lys-742 each participate in a glycyl lysine isopeptide (Lys-Gly) (interchain with G-Cter in SUMO2) cross-link. Residues 819-840 (AQREEQKKIDGAEPLTPQETEE) form a disordered region. Basic and acidic residues predominate over residues 820-829 (QREEQKKIDG). The 53-residue stretch at 847 to 899 (QGFTNWTKRDFNQFIKANEKYGRDDIDNIAREVEGKSPEEVMEYSAVFWERCN) folds into the SANT 1 domain. At Tyr-946 the chain carries Phosphotyrosine. Residues 950-1014 (KGKNYTEEED…QRRCNTLISL (65 aa)) form the SANT 2 domain. Residues 1003–1037 (EFQRRCNTLISLIEKENMEIEERERAEKKKRATKT) adopt a coiled-coil conformation. Residues 1025-1046 (RERAEKKKRATKTPMVKFSAFS) form a disordered region.

Belongs to the SNF2/RAD54 helicase family. ISWI subfamily. As to quaternary structure, may form homodimers. Component of the ACF-1 ISWI chromatin remodeling complex at least composed of SMARCA1 and BAZ1A, which regulates the spacing of histone octamers on the DNA template to facilitate access to DNA. Within the complex interacts with BAZ1A; the interaction is direct. Component of the WICH-1 ISWI chromatin remodeling complex at least composed of SMARCA1 and BAZ1B/WSTF. Within the complex interacts with BAZ1B/WSTF. Component of the NoRC-1 ISWI chromatin remodeling complex at least composed of SMARCA1 and BAZ2A/TIP5. Within the complex interacts with BAZ2A/TIP5. Component of the BRF-1 ISWI chromatin remodeling complex at least composed of SMARCA1 and BAZ2B. Within the complex interacts with BAZ2B. Component of the NURF-1 ISWI chromatin remodeling complex (also called the nucleosome-remodeling factor (NURF) complex) at least composed of SMARCA1, BPTF, RBBP4 and RBBP7. Within the complex interacts with BPTF. Within the complex interacts with RBBP4 and RBBP7. Component of the CERF-1 ISWI chromatin remodeling complex (also called the CECR2-containing-remodeling factor (CERF) complex) at least composed of CECR2 and SMARCA1. LUZP1 is detected as part of the CERF-1 complex in embryonic stem cells where it is involved in complex stabilization but is not detected in the complex in the testis. Component of the RSF-1 ISWI chromatin remodeling complex at least composed of SMARCA1 and RSF1. Within the complex interacts with RSF1. Interacts with PRLR. Interacts with ERCC6. As to expression, predominantly expressed in cortex, cerebellum, ovaries, testes, uterus and placenta.

Its subcellular location is the nucleus. The catalysed reaction is ATP + H2O = ADP + phosphate + H(+). In terms of biological role, ATPase that possesses intrinsic ATP-dependent chromatin-remodeling activity. ATPase activity is substrate-dependent, and is increased when nucleosomes are the substrate, but is also catalytically active when DNA alone is the substrate. Catalytic subunit of ISWI chromatin-remodeling complexes, which form ordered nucleosome arrays on chromatin and facilitate access to DNA during DNA-templated processes such as DNA replication, transcription, and repair. Within the ISWI chromatin-remodeling complexes, slides edge- and center-positioned histone octamers away from their original location on the DNA template. Catalytic activity and histone octamer sliding propensity is regulated and determined by components of the ISWI chromatin-remodeling complexes. The BAZ1A-, BAZ1B-, BAZ2A- and BAZ2B-containing ISWI chromatin-remodeling complexes regulate the spacing of nucleosomes along the chromatin and have the ability to slide mononucleosomes to the center of a DNA template. The CECR2- and RSF1-containing ISWI chromatin-remodeling complexes do not have the ability to slide mononucleosomes to the center of a DNA template. Within the NURF-1 and CERF-1 ISWI chromatin remodeling complexes, nucleosomes are the preferred substrate for its ATPase activity. Within the NURF-1 ISWI chromatin-remodeling complex, binds to the promoters of En1 and En2 to positively regulate their expression and promote brain development. May promote neurite outgrowth. May be involved in the development of luteal cells. Facilitates nucleosome assembly during DNA replication, ensuring replication fork progression and genomic stability by preventing replication stress and nascent DNA gaps. In Mus musculus (Mouse), this protein is SWI/SNF-related matrix-associated actin-dependent regulator of chromatin subfamily A member 1 (Smarca1).